A 294-amino-acid chain; its full sequence is MLENLSTEHRNEKTMNLDEMSIKEVLQSMNEEDRTVALAVENEIEEIEKVVQIVTKSFEEEGRLIYIGAGTSGRLGILDAVECPPTFGTDDNMVQGFIAGGLKAFTKAVEGAEDREELAKEDLKSIGLNEKDTVIGIAASGRTPYVIGGLKYASSVGASTASISCNKNAEISKYAKLNVEVETGAEILTGSTRLKAGTAQKLVLNMISTASMIGVGKVYKNLMVDVQSTNEKLVERSKRIIVEATGASYEVATECYEKADRNVKAAIVMILLQCEYGEALEKLKGAKGFVKKAL.

The 164-residue stretch at 54 to 217 folds into the SIS domain; sequence VTKSFEEEGR…STASMIGVGK (164 aa). The Proton donor role is filled by Glu-82. Glu-113 is an active-site residue.

The protein belongs to the GCKR-like family. MurNAc-6-P etherase subfamily. As to quaternary structure, homodimer.

It carries out the reaction N-acetyl-D-muramate 6-phosphate + H2O = N-acetyl-D-glucosamine 6-phosphate + (R)-lactate. The protein operates within amino-sugar metabolism; N-acetylmuramate degradation. Its function is as follows. Specifically catalyzes the cleavage of the D-lactyl ether substituent of MurNAc 6-phosphate, producing GlcNAc 6-phosphate and D-lactate. This is N-acetylmuramic acid 6-phosphate etherase from Bacillus mycoides (strain KBAB4) (Bacillus weihenstephanensis).